A 130-amino-acid chain; its full sequence is Small ribosomal subunit protein uS11 (130 aa).

This sequence belongs to the universal ribosomal protein uS11 family. As to quaternary structure, part of the 30S ribosomal subunit. Interacts with proteins S7 and S18. Binds to IF-3.

In terms of biological role, located on the platform of the 30S subunit, it bridges several disparate RNA helices of the 16S rRNA. Forms part of the Shine-Dalgarno cleft in the 70S ribosome. The protein is Small ribosomal subunit protein uS11 of Shewanella baltica (strain OS223).